A 348-amino-acid chain; its full sequence is Rhodopsin (348 aa).

Met1 is modified (N-acetylmethionine). Residues 1 to 36 (MNGTEGPNFYVPFSNKTGVVRSPFEYPQYYLAEPWQ) lie on the Extracellular side of the membrane. 2 N-linked (GlcNAc...) asparagine glycosylation sites follow: Asn2 and Asn15. A helical membrane pass occupies residues 37 to 61 (FSMLAAYMFLLIVLGFPINFLTLYV). Residues 62–73 (TVQHKKLRTPLN) are Cytoplasmic-facing. Residues 74-96 (YILLNLAVADLFMVFGGFTTTLY) form a helical membrane-spanning segment. The Extracellular segment spans residues 97-110 (TSLHGYFVFGPTGC). A disulfide bridge connects residues Cys110 and Cys187. A helical membrane pass occupies residues 111–133 (NLEGFFATLGGEIALWSLVVLAI). A 'Ionic lock' involved in activated form stabilization motif is present at residues 134-136 (ERY). Topologically, residues 134–152 (ERYVVVCKPMSNFRFGENH) are cytoplasmic. Residues 153-173 (AIMGVGLTWVMALACAAPPLV) form a helical membrane-spanning segment. The Extracellular portion of the chain corresponds to 174 to 202 (GWSRYIPEGMQCSCGIDYYTLKPEVNNES). Glu201 contacts Zn(2+). The chain crosses the membrane as a helical span at residues 203-224 (FVIYMFVVHFTIPMIVIFFCYG). The Cytoplasmic portion of the chain corresponds to 225-252 (QLVFTVKEAAAQQQESATTQKAEKEVTR). Residues 253-274 (MVIIMVIAFLICWVPYASVAFY) form a helical membrane-spanning segment. Residues 275 to 286 (IFTHQGFNFGPI) lie on the Extracellular side of the membrane. Position 279 (Gln279) interacts with Zn(2+). Residues 287–308 (FMTLPAFFAKAAAIYNPVIYIM) traverse the membrane as a helical segment. The residue at position 296 (Lys296) is an N6-(retinylidene)lysine. The Cytoplasmic segment spans residues 309-348 (MNKQFRTCMITTLCCGKNPLGDDEVSASASKTETSQVAPA). 2 S-palmitoyl cysteine lipidation sites follow: Cys322 and Cys323. The interaction with SAG stretch occupies residues 330 to 348 (DDEVSASASKTETSQVAPA). 2 positions are modified to phosphoserine: Ser334 and Ser338. Phosphothreonine is present on residues Thr340 and Thr342. Ser343 carries the phosphoserine modification.

The protein belongs to the G-protein coupled receptor 1 family. Opsin subfamily. In terms of assembly, homodimer. Interacts (phosphorylated form) with SAG. Interacts with GNAT1. Interacts with GNAT3. SAG and G-proteins compete for a common binding site. Interacts with GRK1. Interacts with PRCD; the interaction promotes PRCD stability. Forms a complex with ASAP1 and ARF4. Forms a complex with ASAP1, RAB11A, Rabin8/RAB3IP, ARF4 and RAB11FIP3; the complex regulates Golgi-to-cilia rhodopsin/RHO transport in photoreceptors. Phosphorylated on some or all of the serine and threonine residues present in the C-terminal region. Post-translationally, contains one covalently linked retinal chromophore. Upon light absorption, the covalently bound 11-cis-retinal is converted to all-trans-retinal. After hydrolysis of the Schiff base and release of the covalently bound all-trans-retinal, active rhodopsin is regenerated by binding of a fresh molecule of 11-cis-retinal.

Its subcellular location is the membrane. The protein localises to the cell projection. It is found in the cilium. The protein resides in the photoreceptor outer segment. In terms of biological role, photoreceptor required for image-forming vision at low light intensity. Required for photoreceptor cell viability after birth. Light-induced isomerization of 11-cis to all-trans retinal triggers a conformational change that activates signaling via G-proteins. Subsequent receptor phosphorylation mediates displacement of the bound G-protein alpha subunit by the arrestin SAG and terminates signaling. This chain is Rhodopsin (RHO), found in Pagophilus groenlandicus (Harp seal).